Reading from the N-terminus, the 932-residue chain is MPSLFEKILRTGDRKTLKRLHVYADAINTLEDSFQTFTDAELREETDKLRARHADGESLDDLLPEAFAAVREGSRRTLGMRQFDVQLMGGAALHLGNIAEMKTGEGKTLVATAPAYLNGLSGKGVHIVTTNDYLASYQSELMGRVHRFMGLTSGCILSAQEPSERRLQYAADVTYGTNNEFGFDYLRDNMAWSSEELVQRGHHFAIVDEVDSILIDEARTPLIISGPASGDANRWYGEFAKVVLRLDVDDDYEVDEKKRTVGVLEPGIEKVEDYLGISNLYESANTPLIGFLNNAIKAKELFKRDKDYVILDGEVLIVDEHTGRILAGRRYNEGMHQAIEAKESVEIKAENQTLATVTLQNYFRLYEKLSGMTGTAETEASEFMGTYELGVVAIPTNKPMVRIDQSDLVYKNEVVKFEAVVKDIEERHKEGQPVLVGTTSVEKSEYLSKQLSKLGIKHEVLNAKNHAREASIVAQAGRKGAVTVATNMAGRGTDIMLGGNAEFNAVTELAKRGLDPEETPEEYEAAWAEAYEKAQEATEEEHEEVVELGGLYVLGTERHESRRIDNQLRGRSGRQGDPGESRFYLSLTDDLMRLFNSGAAERLMGRSVMPDDQALESKLVSKAIASAQGQVEGRNAEQRKNVLKYDDVLNRQREAIYGDRRRILEGDDLHEKVQHFLEDTVNESIDATTAEGHAEGWDYKALWSSLGTLYPIGLTADDVAEEVGGLANVTSDVLKREILSDAKLAYQGREEKLGSETIRELERRVVLSVIGRKWQEHLYEMDYLKEGIGLRAMAQRDPLVEYQREGFVMFQAMMGAIREESVGFLFNLEVQVEEAPAASAGVQANQPSALLDRVNGEDAGAEAHASAKPVLNAPGLAEPERPSQLQFTAPDASGEAETRIERRSTAGSAGDSNLPPSARKTNKPAPKRKKRR.

ATP-binding positions include Gln86, Gly104 to Thr108, and Asp494. Residues Glu857–Arg932 form a disordered region. Positions Thr905–Pro915 are enriched in polar residues. Basic residues predominate over residues Lys920–Arg932.

The protein belongs to the SecA family. In terms of assembly, monomer and homodimer. Part of the essential Sec protein translocation apparatus which comprises SecA, SecYEG and auxiliary proteins SecDF. Other proteins may also be involved.

The protein localises to the cell membrane. The protein resides in the cytoplasm. The catalysed reaction is ATP + H2O + cellular proteinSide 1 = ADP + phosphate + cellular proteinSide 2.. Part of the Sec protein translocase complex. Interacts with the SecYEG preprotein conducting channel. Has a central role in coupling the hydrolysis of ATP to the transfer of proteins into and across the cell membrane, serving as an ATP-driven molecular motor driving the stepwise translocation of polypeptide chains across the membrane. This Renibacterium salmoninarum (strain ATCC 33209 / DSM 20767 / JCM 11484 / NBRC 15589 / NCIMB 2235) protein is Protein translocase subunit SecA.